Consider the following 354-residue polypeptide: 3-dehydroquinate synthase (354 aa).

NAD(+) contacts are provided by residues 61–66 (DGESTK), 119–120 (TT), Lys132, Lys141, and 159–162 (FLET). 3 residues coordinate Zn(2+): Glu174, His238, and His254.

This sequence belongs to the sugar phosphate cyclases superfamily. Dehydroquinate synthase family. NAD(+) is required as a cofactor. The cofactor is Co(2+). Zn(2+) serves as cofactor.

It is found in the cytoplasm. It catalyses the reaction 7-phospho-2-dehydro-3-deoxy-D-arabino-heptonate = 3-dehydroquinate + phosphate. The protein operates within metabolic intermediate biosynthesis; chorismate biosynthesis; chorismate from D-erythrose 4-phosphate and phosphoenolpyruvate: step 2/7. Catalyzes the conversion of 3-deoxy-D-arabino-heptulosonate 7-phosphate (DAHP) to dehydroquinate (DHQ). The protein is 3-dehydroquinate synthase of Saccharolobus solfataricus (strain ATCC 35092 / DSM 1617 / JCM 11322 / P2) (Sulfolobus solfataricus).